A 198-amino-acid polypeptide reads, in one-letter code: Recombination protein RecR (198 aa).

A C4-type zinc finger spans residues Cys-57–Cys-72. In terms of domain architecture, Toprim spans Ser-80–Pro-175.

Belongs to the RecR family.

Its function is as follows. May play a role in DNA repair. It seems to be involved in an RecBC-independent recombinational process of DNA repair. It may act with RecF and RecO. This chain is Recombination protein RecR, found in Brevibacillus brevis (strain 47 / JCM 6285 / NBRC 100599).